A 542-amino-acid polypeptide reads, in one-letter code: Chaperonin GroEL 1 (542 aa).

Residues 29–32 (TIGP), 86–90 (DGTTT), glycine 415, 479–481 (NAA), and aspartate 495 contribute to the ATP site.

The protein belongs to the chaperonin (HSP60) family. As to quaternary structure, forms a cylinder of 14 subunits composed of two heptameric rings stacked back-to-back. Interacts with the co-chaperonin GroES.

It is found in the cytoplasm. It carries out the reaction ATP + H2O + a folded polypeptide = ADP + phosphate + an unfolded polypeptide.. Together with its co-chaperonin GroES, plays an essential role in assisting protein folding. The GroEL-GroES system forms a nano-cage that allows encapsulation of the non-native substrate proteins and provides a physical environment optimized to promote and accelerate protein folding. This Streptomyces avermitilis (strain ATCC 31267 / DSM 46492 / JCM 5070 / NBRC 14893 / NCIMB 12804 / NRRL 8165 / MA-4680) protein is Chaperonin GroEL 1.